A 185-amino-acid chain; its full sequence is Ribosome-recycling factor (185 aa).

Belongs to the RRF family.

Its subcellular location is the cytoplasm. In terms of biological role, responsible for the release of ribosomes from messenger RNA at the termination of protein biosynthesis. May increase the efficiency of translation by recycling ribosomes from one round of translation to another. The protein is Ribosome-recycling factor of Vibrio vulnificus (strain YJ016).